The sequence spans 43 residues: Protein PsbN (43 aa).

The helical transmembrane segment at 4–24 threads the bilayer; the sequence is GILIVIFISCLLVSFTGYAVY.

It belongs to the PsbN family.

The protein localises to the plastid. It localises to the chloroplast thylakoid membrane. Its function is as follows. May play a role in photosystem I and II biogenesis. This is Protein PsbN from Coleochaete orbicularis (Charophycean green alga).